The chain runs to 250 residues: HTH-type transcriptional regulator SarS (250 aa).

2 consecutive DNA-binding regions (H-T-H motif) follow at residues 53 to 76 (FKKI…VLVK) and 177 to 200 (LKDL…NLKK).

The protein belongs to the SarA family.

The protein localises to the cytoplasm. Its function is as follows. Transcriptional regulator that controls expression of some virulence factors in a cell density-dependent manner. This chain is HTH-type transcriptional regulator SarS (sarS), found in Staphylococcus aureus (strain MRSA252).